A 590-amino-acid polypeptide reads, in one-letter code: G protein-coupled receptor kinase 5 (590 aa).

The segment at 1 to 185 (MELENIVANT…LERQPVTKNT (185 aa)) is N-terminal. Residues 20–39 (GGKRKGKSKKWKEILKFPHI) form an interaction with calmodulin region. Residues 53–171 (YYSLCDKQPI…LDSMYFDRFL (119 aa)) form the RGS domain. Ser136 is subject to Phosphoserine. Positions 186–448 (FRQYRVLGKG…AAEVKRHPFF (263 aa)) constitute a Protein kinase domain. ATP-binding positions include 192-200 (LGKGGFGEV) and Lys215. The active-site Proton acceptor is Asp311. The Nuclear localization signal signature appears at 388–395 (RKEKVKRE). Residues 449–514 (RNMNFKRLEA…GSVPIPWQNE (66 aa)) form the AGC-kinase C-terminal domain. Position 484 is a phosphoserine; by autocatalysis (Ser484). Thr485 bears the Phosphothreonine; by autocatalysis mark. The tract at residues 546 to 565 (PKKGLFHRLFRRQHQSNSKS) is sufficient for membrane localization. The segment at 557–590 (RQHQSNSKSSPTPKTSCNHRINSNHINSNSTGSS) is disordered. Residues 561–590 (SNSKSSPTPKTSCNHRINSNHINSNSTGSS) show a composition bias toward low complexity. At Ser579 the chain carries Phosphoserine.

This sequence belongs to the protein kinase superfamily. AGC Ser/Thr protein kinase family. GPRK subfamily. As to quaternary structure, interacts with ST13 (via the C-terminus 303-319 AA). Interacts with TP53/p53. Interacts with HTR4 (via C-terminus 330-346 AA); this interaction is promoted by 5-HT (serotonin). Interacts with HDAC5. Interacts with GIT1. In terms of processing, autophosphorylated. Autophosphorylation may play a critical role in the regulation of GRK5 kinase activity.

It is found in the cytoplasm. Its subcellular location is the nucleus. It localises to the cell membrane. The catalysed reaction is [G-protein-coupled receptor] + ATP = [G-protein-coupled receptor]-phosphate + ADP + H(+). Inhibited by calmodulin with an IC(50) of 50 nM. Calmodulin inhibits GRK5 association with receptor and phospholipid. In terms of biological role, serine/threonine kinase that phosphorylates preferentially the activated forms of a variety of G-protein-coupled receptors (GPCRs). Such receptor phosphorylation initiates beta-arrestin-mediated receptor desensitization, internalization, and signaling events leading to their down-regulation. Phosphorylates a variety of GPCRs, including adrenergic receptors, muscarinic acetylcholine receptors (more specifically Gi-coupled M2/M4 subtypes), dopamine receptors and opioid receptors. In addition to GPCRs, also phosphorylates various substrates: Hsc70-interacting protein/ST13, TP53/p53, HDAC5, and arrestin-1/ARRB1. Phosphorylation of ARRB1 by GRK5 inhibits G-protein independent MAPK1/MAPK3 signaling downstream of 5HT4-receptors. Phosphorylation of HDAC5, a repressor of myocyte enhancer factor 2 (MEF2) leading to nuclear export of HDAC5 and allowing MEF2-mediated transcription. Phosphorylation of TP53/p53, a crucial tumor suppressor, inhibits TP53/p53-mediated apoptosis. Phosphorylation of ST13 regulates internalization of the chemokine receptor. Phosphorylates rhodopsin (RHO) (in vitro) and a non G-protein-coupled receptor, LRP6 during Wnt signaling (in vitro). The chain is G protein-coupled receptor kinase 5 (Grk5) from Mus musculus (Mouse).